The primary structure comprises 286 residues: B3 domain-containing protein REM11 (286 aa).

A DNA-binding region (TF-B3 1) is located at residues 1–70 (MAWNLAIITL…TPMLSLVSTQ (70 aa)). Positions 68–114 (STQSTSHKSQKRECSKHSEKESISAVPSKGKKNRKARSNREERRDSS) are disordered. Residues 78–89 (KRECSKHSEKES) are compositionally biased toward basic and acidic residues. Positions 119-219 (NRFVTFTPED…RAQVCFYGVF (101 aa)) form a DNA-binding region, TF-B3 2.

It localises to the nucleus. This is B3 domain-containing protein REM11 (REM11) from Arabidopsis thaliana (Mouse-ear cress).